The following is a 306-amino-acid chain: Glutaminase (306 aa).

Ser66, Asn116, Glu159, Asn166, Tyr190, Tyr242, and Val260 together coordinate substrate.

The protein belongs to the glutaminase family. As to quaternary structure, homotetramer.

The enzyme catalyses L-glutamine + H2O = L-glutamate + NH4(+). The protein is Glutaminase of Caulobacter vibrioides (strain ATCC 19089 / CIP 103742 / CB 15) (Caulobacter crescentus).